The primary structure comprises 216 residues: uncharacterized protein (216 aa).

The signal sequence occupies residues 1 to 17 (MLKKIIILFLGMFLLSA). C18 carries N-palmitoyl cysteine lipidation. C18 carries the S-diacylglycerol cysteine lipid modification. A coiled-coil region spans residues 133–162 (SDKEKKIQEELNQIKAMLRETKRDISKYTC).

It is found in the cell membrane. This is an uncharacterized protein from Rickettsia conorii (strain ATCC VR-613 / Malish 7).